A 664-amino-acid chain; its full sequence is Transmembrane protein 201 (664 aa).

Methionine 1 carries the N-acetylmethionine modification. Topologically, residues 1-214 (MEGVSALLAS…SSSAVKAPFQ (214 aa)) are nuclear. The chain crosses the membrane as a helical span at residues 215 to 235 (VILLRALAFLACAFLLFTTLY). Residues 236–297 (GPSEPFTPGA…EAWAFGQSHQ (62 aa)) are Perinuclear space-facing. Positions 245 to 261 (AALPPALPPGGNSSAAS) are enriched in low complexity. The tract at residues 245-264 (AALPPALPPGGNSSAASDNT) is disordered. A helical transmembrane segment spans residues 298–318 (TSIVAVGLLTCLLAMLLAGRI). Residues 319–322 (RLRR) are Nuclear-facing. A helical membrane pass occupies residues 323 to 343 (IDAFSTCLWALLLGLHLAEHY). The Perinuclear space portion of the chain corresponds to 344–356 (LQAASPGWLDTLK). The chain crosses the membrane as a helical span at residues 357-374 (FSTTSLCCLVGFTAAVAT). Residues 375–642 (RKSTGPRRFR…ARVSPSLVRG (268 aa)) are Nuclear-facing. A phosphoserine mark is found at serine 441, serine 444, serine 450, serine 454, serine 466, serine 477, and serine 480. Residues 502–522 (PLPSPAPSVASSVASSSGSLR) are disordered. Low complexity predominate over residues 508–520 (PSVASSVASSSGS). Serine 529 carries the post-translational modification Phosphoserine. The segment at 544–629 (SSPGEAPNTP…TTKGCSEETT (86 aa)) is disordered. Basic and acidic residues-rich tracts occupy residues 578–587 (HTRDTKHTME) and 595–608 (DSAR…KEDE). The segment covering 610 to 628 (SQSSTCVVDTTTKGCSEET) has biased composition (polar residues). Residues 643 to 663 (LLAVSLAVNALFTSAYLYQSL) traverse the membrane as a helical segment. Residue arginine 664 is a topological domain, perinuclear space.

It belongs to the TMEM201 family. In terms of assembly, isoform 2 interacts with EMD. Isoform 3 interacts with SUN2 and LMNA. May bind to Ran GTPase; has a greater affinity for Ran-GTP over Ran-GDP.

It is found in the nucleus inner membrane. Critical regulator of angiogenesis and endothelial cell (EC) migration. Promotes the migration of endothelial cells, which is essential for angiogenesis. Interacts with the linker of nucleoskeleton and cytoskeleton (LINC) complex, which plays a vital role in connecting the cell's cytoskeleton to the nuclear envelope. This interaction is essential for maintaining cellular structure and facilitating the movement of endothelial cells, which is critical for proper vascular development. Involved in nuclear movement during fibroblast polarization and migration. May recruit Ran GTPase to the nuclear periphery. In terms of biological role, may define a distinct membrane domain in the vicinity of the mitotic spindle. Involved in the organization of the nuclear envelope implicating EMD, SUN1 and A-type lamina. Functionally, proposed to be involved in actin-dependent nuclear movement; via SUN2 associates with transmembrane actin-associated nuclear (TAN) lines which are bound to F-actin cables and couple the nucleus to retrograde actin flow. The chain is Transmembrane protein 201 (Tmem201) from Mus musculus (Mouse).